A 319-amino-acid polypeptide reads, in one-letter code: Lipoyl synthase (319 aa).

The tract at residues 1–29 (MVVVVDTVSDKPIRPRHPEKAARPDALSP) is disordered. The span at 8 to 29 (VSDKPIRPRHPEKAARPDALSP) shows a compositional bias: basic and acidic residues. Residues Cys61, Cys66, Cys72, Cys87, Cys91, Cys94, and Ser300 each coordinate [4Fe-4S] cluster. In terms of domain architecture, Radical SAM core spans 73-289 (WDRKHATFMI…ESLAYAKGFL (217 aa)).

Belongs to the radical SAM superfamily. Lipoyl synthase family. Requires [4Fe-4S] cluster as cofactor.

Its subcellular location is the cytoplasm. The catalysed reaction is [[Fe-S] cluster scaffold protein carrying a second [4Fe-4S](2+) cluster] + N(6)-octanoyl-L-lysyl-[protein] + 2 oxidized [2Fe-2S]-[ferredoxin] + 2 S-adenosyl-L-methionine + 4 H(+) = [[Fe-S] cluster scaffold protein] + N(6)-[(R)-dihydrolipoyl]-L-lysyl-[protein] + 4 Fe(3+) + 2 hydrogen sulfide + 2 5'-deoxyadenosine + 2 L-methionine + 2 reduced [2Fe-2S]-[ferredoxin]. It functions in the pathway protein modification; protein lipoylation via endogenous pathway; protein N(6)-(lipoyl)lysine from octanoyl-[acyl-carrier-protein]: step 2/2. Functionally, catalyzes the radical-mediated insertion of two sulfur atoms into the C-6 and C-8 positions of the octanoyl moiety bound to the lipoyl domains of lipoate-dependent enzymes, thereby converting the octanoylated domains into lipoylated derivatives. In Rhodopseudomonas palustris (strain BisA53), this protein is Lipoyl synthase.